Here is a 62-residue protein sequence, read N- to C-terminus: Large ribosomal subunit protein bL28 (62 aa).

The tract at residues 1–26 (MARKCYVTGKSPKSGNNRSHALNKTK) is disordered. Polar residues predominate over residues 11-20 (SPKSGNNRSH).

Belongs to the bacterial ribosomal protein bL28 family.

The chain is Large ribosomal subunit protein bL28 from Exiguobacterium sp. (strain ATCC BAA-1283 / AT1b).